The sequence spans 84 residues: Exodeoxyribonuclease 7 small subunit (84 aa).

Belongs to the XseB family. As to quaternary structure, heterooligomer composed of large and small subunits.

It is found in the cytoplasm. The catalysed reaction is Exonucleolytic cleavage in either 5'- to 3'- or 3'- to 5'-direction to yield nucleoside 5'-phosphates.. Functionally, bidirectionally degrades single-stranded DNA into large acid-insoluble oligonucleotides, which are then degraded further into small acid-soluble oligonucleotides. The protein is Exodeoxyribonuclease 7 small subunit of Caulobacter vibrioides (strain ATCC 19089 / CIP 103742 / CB 15) (Caulobacter crescentus).